The sequence spans 1043 residues: Polycomb protein Pcl (1043 aa).

Disordered stretches follow at residues 1–34 (MMNN…SAPP), 271–302 (PDST…PLLA), 317–346 (FKTV…AAPS), and 395–422 (KLRK…NTSP). A compositionally biased stretch (low complexity) spans 25–34 (PSTAVPSAPP). Residues 324 to 344 (PPTPPTPPSPPPPPPAPPVAA) are compositionally biased toward pro residues. Residues 349–404 (VTYALQEDVFIKCNDGRFYLGTIIDQTSDQYLIRFDDQSEQWCEPDKLRKLGGGSS) enclose the Tudor domain. The segment covering 399-412 (LGGGSSITAGGGGA) has biased composition (gly residues). 2 consecutive PHD-type zinc fingers follow at residues 424–472 (GPMC…CAKP) and 512–560 (QIYC…VFCC). The span at 737–757 (AKKQAAQKADKHDELPLKPDL) shows a compositional bias: basic and acidic residues. 2 disordered regions span residues 737 to 819 (AKKQ…TSSL) and 931 to 985 (AKDL…PGHS). Residues 783–792 (SRKRKAFRLS) are compositionally biased toward basic residues. Basic and acidic residues predominate over residues 793-804 (KRYDNSRNHCDL). Ser-805 and Ser-806 each carry phosphoserine. Residues 807–819 (DENSSSSRGTSSL) show a composition bias toward low complexity. The segment covering 945-954 (THGRLLRQRP) has biased composition (basic residues). The segment covering 955 to 977 (QKQSPSQSRRNSTSSTATSSSSN) has biased composition (low complexity).

The protein belongs to the Polycomblike family. In terms of assembly, component of a form of the Esc/E(z) complex present specifically during early embryogenesis which is composed of Caf1-55, esc, E(z), Su(z)12, Pcl and HDAC1/Rpd3. This complex is distinct from the PRC1 complex, which contains many other PcG proteins like Pc, Ph, Psc, Su(z)2. The two complexes however cooperate and interact together during the first 3 hours of development to establish PcG silencing. Interacts with corto in vitro.

It localises to the nucleus. It is found in the chromosome. Functionally, polycomb group (PcG) protein. While PcG proteins are generally required to maintain the transcriptionally repressive state of homeotic genes throughout development, this protein is specifically required during the first 6 hours of embryogenesis to establish the repressed state. Component of the Esc/E(z) complex, which methylates 'Lys-9' and 'Lys-27' residues of histone H3, leading to transcriptional repression of the affected target gene. The Esc/E(z) complex is necessary but not sufficient for the repression of homeotic target genes, suggesting that the recruitment of the distinct PRC1 complex is also required. Required for the correct spatial expression of the homeotic genes of the Antennapedia and Bithorax complexes. In Drosophila melanogaster (Fruit fly), this protein is Polycomb protein Pcl (Pcl).